Here is a 152-residue protein sequence, read N- to C-terminus: Small ribosomal subunit protein uS8m (152 aa).

Belongs to the universal ribosomal protein uS8 family. In terms of assembly, component of the mitochondrial small ribosomal subunit (mt-SSU). Mature yeast 74S mitochondrial ribosomes consist of a small (37S) and a large (54S) subunit. The 37S small subunit contains a 15S ribosomal RNA (15S mt-rRNA) and at least 32 different proteins. The 54S large subunit contains a 21S rRNA (21S mt-rRNA) and at least 45 different proteins.

It is found in the mitochondrion. Functionally, component of the mitochondrial ribosome (mitoribosome), a dedicated translation machinery responsible for the synthesis of mitochondrial genome-encoded proteins, including at least some of the essential transmembrane subunits of the mitochondrial respiratory chain. The mitoribosomes are attached to the mitochondrial inner membrane and translation products are cotranslationally integrated into the membrane. This Schizosaccharomyces pombe (strain 972 / ATCC 24843) (Fission yeast) protein is Small ribosomal subunit protein uS8m (mrps8).